We begin with the raw amino-acid sequence, 267 residues long: RWD domain-containing protein 3 (267 aa).

Positions 7 to 114 (EELSVLAAIF…LWIQQNLRHI (108 aa)) constitute an RWD domain. Interaction with UBE2I/UBC9 stretches follow at residues 13-15 (AAI) and 100-102 (VHE).

Isoform 1 and isoform 2 interact with UBE2I/UBC9. Isoform 1 shows a greater interaction with NFKBIA and HIF1A as compared to isoform 2. Isoform 2 interacts with NCOA2 and NR3C1. As to expression, isoform 1 and isoform 2 are expressed in glioma tumors (at protein level). Expressed in a wide number of tissues with highest expression in cerebellum, pituitary, heart, kidney, liver, stomach, pancreas, prostate and spleen. Low levels in thalamus, spinal cord, esophagus, thymus, lung and peripheral blood leukocytes. A higher level expression seen in pituitary tumors as compared to the pituitary gland.

The protein localises to the nucleus. It localises to the cytoplasm. Enhancer of SUMO conjugation. Via its interaction with UBE2I/UBC9, increases SUMO conjugation to proteins by promoting the binding of E1 and E2 enzymes, thioester linkage between SUMO and UBE2I/UBC9 and transfer of SUMO to specific target proteins which include HIF1A, PIAS, NFKBIA, NR3C1 and TOP1. Isoform 1 and isoform 2 positively regulate the NF-kappa-B signaling pathway by enhancing the sumoylation of NF-kappa-B inhibitor alpha (NFKBIA), promoting its stabilization which consequently leads to an increased inhibition of NF-kappa-B transcriptional activity. Isoform 1 and isoform 2 negatively regulate the hypoxia-inducible factor-1 alpha (HIF1A) signaling pathway by increasing the sumoylation of HIF1A, promoting its stabilization, transcriptional activity and the expression of its target gene VEGFA during hypoxia. Isoform 2 promotes the sumoylation and transcriptional activity of the glucocorticoid receptor NR3C1 and enhances the interaction of SUMO1 and NR3C1 with UBE2I/UBC9. Has no effect on ubiquitination. This chain is RWD domain-containing protein 3 (RWDD3), found in Homo sapiens (Human).